A 109-amino-acid polypeptide reads, in one-letter code: Sulredoxin (109 aa).

One can recognise a Rieske domain in the interval 3–107 (WKRTISAKAL…IRDNNGWIEV (105 aa)). Cys43, His45, Cys62, and His65 together coordinate [2Fe-2S] cluster.

Homooligomeric. [2Fe-2S] cluster serves as cofactor.

Its subcellular location is the cytoplasm. In terms of biological role, not yet known. This Sulfurisphaera tokodaii (strain DSM 16993 / JCM 10545 / NBRC 100140 / 7) (Sulfolobus tokodaii) protein is Sulredoxin (sdx).